The following is a 303-amino-acid chain: Acetylglutamate kinase (303 aa).

Substrate is bound by residues 69–70 (GG), Arg91, and Asn190.

It belongs to the acetylglutamate kinase family. ArgB subfamily.

The protein localises to the cytoplasm. It carries out the reaction N-acetyl-L-glutamate + ATP = N-acetyl-L-glutamyl 5-phosphate + ADP. The protein operates within amino-acid biosynthesis; L-arginine biosynthesis; N(2)-acetyl-L-ornithine from L-glutamate: step 2/4. Its function is as follows. Catalyzes the ATP-dependent phosphorylation of N-acetyl-L-glutamate. In Nocardia farcinica (strain IFM 10152), this protein is Acetylglutamate kinase.